The chain runs to 159 residues: Dehydratase GME11372 (159 aa).

Residues H79 and H104 contribute to the active site.

The protein belongs to the scytalone dehydratase family. As to quaternary structure, homotrimer. Each subunit contains an active site, located in the central part of the hydrophobic core of the monomer, which functions independently.

It functions in the pathway secondary metabolite biosynthesis. Functionally, dehydratase; part of the gene cluster that mediates the biosynthesis of dibenzodioxocinones such as pestalotiollide B, a novel class of inhibitors against cholesterol ester transfer protein (CEPT). The biosynthesis initiates from condensation of acetate and malonate units catalyzed by the non-reducing PKS pks8/GME11356. Pks8/GME11356 lacks a thioesterase (TE) domain, which is important to the cyclizing of the third ring of atrochrysone carboxylic acid, and the esterase GME11355 might play the role of TE and catalyzes the cyclization reaction of the C ring. The lactamase-like protein GME11357 (or other beta-lactamases in Pestalotiopsis microspora) probably hydrolyzes the thioester bond between the ACP of pks8/GME11356 and the intermediate to release atrochrysone carboxylic acid, which is spontaneously dehydrates to form endocrocin anthrone. Endocrocin anthrone is further converted to emodin via the endocrocin intermediate. Emodin is then oxidized by several enzymes such as the Baeyer-Villiger oxidase GME11358, the oxidoreductase GME11367, the short chain dehydrogenase/reductase GME11373, as well as by other oxidoreductases from the cluster, to modify the A and C rings and open the B ring, and finally yield monodictyphenone. The prenyltransferase GME11375 may catalyze the addition reaction between the C5 side chains and the carbon bone of dibenzodioxocinones. The remaining biochemical reactions to the final product dibenzodioxocinones should be methylation catalyzed by methyltransferase GME11366 and reduction and lactonization reaction catalyzed by a series of oxidordeuctases. The chain is Dehydratase GME11372 from Pestalotiopsis microspora.